Consider the following 280-residue polypeptide: MSSSLQELCRKKLPDCILPEFFDDYVLQLLGLHWQDHGSLQRIEKNQILVQQEPIHINEALKVAASEGNYEIVELLLSWEADPRYAVVGALESKYYDLVHKYYGQVKDCHDILPLIQNPETFEKCHELNSTCSLKCLFKHAVMNDMLPILEKYTDYLDRWEYCSQMLFELACRKKKYEMVVWIEGVLCVGKVTSLFTIAISNRDLQLYSLGYSIILEKMYSCRQDPTFLLNHFLRDVSIKGLLPFVLKTIEYGGSKEIAITLAKKYQHKHILKYFETWES.

The protein belongs to the asfivirus MGF 505 family.

Functionally, plays a role in virus cell tropism, and may be required for efficient virus replication in macrophages. This Ornithodoros (relapsing fever ticks) protein is Protein MGF 505-3R.